The sequence spans 320 residues: Ferrochelatase (320 aa).

Fe cation contacts are provided by histidine 194 and glutamate 275.

The protein belongs to the ferrochelatase family.

Its subcellular location is the cytoplasm. It carries out the reaction heme b + 2 H(+) = protoporphyrin IX + Fe(2+). The protein operates within porphyrin-containing compound metabolism; protoheme biosynthesis; protoheme from protoporphyrin-IX: step 1/1. In terms of biological role, catalyzes the ferrous insertion into protoporphyrin IX. In Cronobacter sakazakii (strain ATCC BAA-894) (Enterobacter sakazakii), this protein is Ferrochelatase.